Consider the following 471-residue polypeptide: Siroheme synthase (471 aa).

The interval 1–203 (MEYLPLFADL…GRLEQAEQAL (203 aa)) is precorrin-2 dehydrogenase /sirohydrochlorin ferrochelatase. Residues 22–23 (EV) and 43–44 (RA) each bind NAD(+). Phosphoserine is present on Ser-128. Residues 215 to 471 (GEVALVGAGP…QKRASVVNLA (257 aa)) are uroporphyrinogen-III C-methyltransferase. Residue Pro-224 participates in S-adenosyl-L-methionine binding. Asp-247 functions as the Proton acceptor in the catalytic mechanism. Lys-269 serves as the catalytic Proton donor. S-adenosyl-L-methionine is bound by residues 300-302 (GGD), Ile-305, 330-331 (TA), Met-382, and Gly-411.

It in the N-terminal section; belongs to the precorrin-2 dehydrogenase / sirohydrochlorin ferrochelatase family. The protein in the C-terminal section; belongs to the precorrin methyltransferase family.

The enzyme catalyses uroporphyrinogen III + 2 S-adenosyl-L-methionine = precorrin-2 + 2 S-adenosyl-L-homocysteine + H(+). It catalyses the reaction precorrin-2 + NAD(+) = sirohydrochlorin + NADH + 2 H(+). It carries out the reaction siroheme + 2 H(+) = sirohydrochlorin + Fe(2+). Its pathway is cofactor biosynthesis; adenosylcobalamin biosynthesis; precorrin-2 from uroporphyrinogen III: step 1/1. It participates in cofactor biosynthesis; adenosylcobalamin biosynthesis; sirohydrochlorin from precorrin-2: step 1/1. It functions in the pathway porphyrin-containing compound metabolism; siroheme biosynthesis; precorrin-2 from uroporphyrinogen III: step 1/1. The protein operates within porphyrin-containing compound metabolism; siroheme biosynthesis; siroheme from sirohydrochlorin: step 1/1. Its pathway is porphyrin-containing compound metabolism; siroheme biosynthesis; sirohydrochlorin from precorrin-2: step 1/1. In terms of biological role, multifunctional enzyme that catalyzes the SAM-dependent methylations of uroporphyrinogen III at position C-2 and C-7 to form precorrin-2 via precorrin-1. Then it catalyzes the NAD-dependent ring dehydrogenation of precorrin-2 to yield sirohydrochlorin. Finally, it catalyzes the ferrochelation of sirohydrochlorin to yield siroheme. This is Siroheme synthase from Sodalis glossinidius (strain morsitans).